The chain runs to 268 residues: Imidazole glycerol phosphate synthase subunit HisF (268 aa).

Residues Asp-12 and Asp-131 contribute to the active site.

Belongs to the HisA/HisF family. As to quaternary structure, heterodimer of HisH and HisF.

It localises to the cytoplasm. It carries out the reaction 5-[(5-phospho-1-deoxy-D-ribulos-1-ylimino)methylamino]-1-(5-phospho-beta-D-ribosyl)imidazole-4-carboxamide + L-glutamine = D-erythro-1-(imidazol-4-yl)glycerol 3-phosphate + 5-amino-1-(5-phospho-beta-D-ribosyl)imidazole-4-carboxamide + L-glutamate + H(+). Its pathway is amino-acid biosynthesis; L-histidine biosynthesis; L-histidine from 5-phospho-alpha-D-ribose 1-diphosphate: step 5/9. Functionally, IGPS catalyzes the conversion of PRFAR and glutamine to IGP, AICAR and glutamate. The HisF subunit catalyzes the cyclization activity that produces IGP and AICAR from PRFAR using the ammonia provided by the HisH subunit. This chain is Imidazole glycerol phosphate synthase subunit HisF, found in Methanoregula boonei (strain DSM 21154 / JCM 14090 / 6A8).